Reading from the N-terminus, the 363-residue chain is Peptide chain release factor 1 (363 aa).

Q237 bears the N5-methylglutamine mark. The disordered stretch occupies residues 281–302 (QQAEDEKSHAEEQTIRRSLVAS). Residues 282-295 (QAEDEKSHAEEQTI) are compositionally biased toward basic and acidic residues.

The protein belongs to the prokaryotic/mitochondrial release factor family. In terms of processing, methylated by PrmC. Methylation increases the termination efficiency of RF1.

The protein resides in the cytoplasm. Its function is as follows. Peptide chain release factor 1 directs the termination of translation in response to the peptide chain termination codons UAG and UAA. The polypeptide is Peptide chain release factor 1 (Psychromonas ingrahamii (strain DSM 17664 / CCUG 51855 / 37)).